The primary structure comprises 224 residues: Aminopyrimidine aminohydrolase (224 aa).

Residue D44 coordinates substrate. Catalysis depends on C135, which acts as the Nucleophile. Positions 139 and 165 each coordinate substrate. Catalysis depends on E207, which acts as the Proton donor.

It belongs to the TenA family. As to quaternary structure, homotetramer.

The catalysed reaction is 4-amino-5-aminomethyl-2-methylpyrimidine + H2O = 4-amino-5-hydroxymethyl-2-methylpyrimidine + NH4(+). The enzyme catalyses thiamine + H2O = 5-(2-hydroxyethyl)-4-methylthiazole + 4-amino-5-hydroxymethyl-2-methylpyrimidine + H(+). The protein operates within cofactor biosynthesis; thiamine diphosphate biosynthesis. Catalyzes an amino-pyrimidine hydrolysis reaction at the C5' of the pyrimidine moiety of thiamine compounds, a reaction that is part of a thiamine salvage pathway. Thus, catalyzes the conversion of 4-amino-5-aminomethyl-2-methylpyrimidine to 4-amino-5-hydroxymethyl-2-methylpyrimidine (HMP). To a lesser extent, is also able to catalyze the hydrolytic cleavage of thiamine; however, this thiaminase activity is unlikely to be physiologically relevant. Therefore, is involved in the regeneration of the thiamine pyrimidine from thiamine degraded products present in the environment, rather than in thiamine degradation. The chain is Aminopyrimidine aminohydrolase from Halalkalibacterium halodurans (strain ATCC BAA-125 / DSM 18197 / FERM 7344 / JCM 9153 / C-125) (Bacillus halodurans).